The chain runs to 878 residues: DNA mismatch repair protein MutS (878 aa).

630-637 (GPNMAGKS) contacts ATP.

It belongs to the DNA mismatch repair MutS family.

In terms of biological role, this protein is involved in the repair of mismatches in DNA. It is possible that it carries out the mismatch recognition step. This protein has a weak ATPase activity. This Chlorobaculum tepidum (strain ATCC 49652 / DSM 12025 / NBRC 103806 / TLS) (Chlorobium tepidum) protein is DNA mismatch repair protein MutS.